Here is a 189-residue protein sequence, read N- to C-terminus: dCTP deaminase (189 aa).

DCTP is bound by residues 112 to 117 (KSTYAR), 136 to 138 (TLE), glutamine 157, tyrosine 171, and glutamine 181. Glutamate 138 acts as the Proton donor/acceptor in catalysis.

The protein belongs to the dCTP deaminase family. Homotrimer.

The enzyme catalyses dCTP + H2O + H(+) = dUTP + NH4(+). It participates in pyrimidine metabolism; dUMP biosynthesis; dUMP from dCTP (dUTP route): step 1/2. Functionally, catalyzes the deamination of dCTP to dUTP. The protein is dCTP deaminase of Nitrosospira multiformis (strain ATCC 25196 / NCIMB 11849 / C 71).